Reading from the N-terminus, the 170-residue chain is Bifunctional protein PyrR (170 aa).

The PRPP-binding signature appears at 90–102; sequence LVLIDDVLMSGRT.

Belongs to the purine/pyrimidine phosphoribosyltransferase family. PyrR subfamily.

It carries out the reaction UMP + diphosphate = 5-phospho-alpha-D-ribose 1-diphosphate + uracil. Regulates the transcription of the pyrimidine nucleotide (pyr) operon in response to exogenous pyrimidines. Its function is as follows. Also displays a weak uracil phosphoribosyltransferase activity which is not physiologically significant. The protein is Bifunctional protein PyrR of Pseudomonas syringae pv. tomato (strain ATCC BAA-871 / DC3000).